Reading from the N-terminus, the 192-residue chain is Probable nicotinate-nucleotide adenylyltransferase (192 aa).

The protein belongs to the NadD family.

The enzyme catalyses nicotinate beta-D-ribonucleotide + ATP + H(+) = deamido-NAD(+) + diphosphate. It participates in cofactor biosynthesis; NAD(+) biosynthesis; deamido-NAD(+) from nicotinate D-ribonucleotide: step 1/1. Its function is as follows. Catalyzes the reversible adenylation of nicotinate mononucleotide (NaMN) to nicotinic acid adenine dinucleotide (NaAD). The chain is Probable nicotinate-nucleotide adenylyltransferase from Cytophaga hutchinsonii (strain ATCC 33406 / DSM 1761 / CIP 103989 / NBRC 15051 / NCIMB 9469 / D465).